The primary structure comprises 99 residues: Cytochrome c-555 (99 aa).

Cysteine 23, cysteine 26, histidine 27, and methionine 73 together coordinate heme c.

Binds 1 heme c group covalently per subunit.

This chain is Cytochrome c-555, found in Prosthecochloris aestuarii.